The primary structure comprises 577 residues: 2-succinyl-5-enolpyruvyl-6-hydroxy-3-cyclohexene-1-carboxylate synthase (577 aa).

It belongs to the TPP enzyme family. MenD subfamily. In terms of assembly, homodimer. It depends on Mg(2+) as a cofactor. Mn(2+) is required as a cofactor. Requires thiamine diphosphate as cofactor.

The catalysed reaction is isochorismate + 2-oxoglutarate + H(+) = 5-enolpyruvoyl-6-hydroxy-2-succinyl-cyclohex-3-ene-1-carboxylate + CO2. Its pathway is quinol/quinone metabolism; 1,4-dihydroxy-2-naphthoate biosynthesis; 1,4-dihydroxy-2-naphthoate from chorismate: step 2/7. It functions in the pathway cofactor biosynthesis; phylloquinone biosynthesis. Catalyzes the thiamine diphosphate-dependent decarboxylation of 2-oxoglutarate and the subsequent addition of the resulting succinic semialdehyde-thiamine pyrophosphate anion to isochorismate to yield 2-succinyl-5-enolpyruvyl-6-hydroxy-3-cyclohexene-1-carboxylate (SEPHCHC). The polypeptide is 2-succinyl-5-enolpyruvyl-6-hydroxy-3-cyclohexene-1-carboxylate synthase (Synechococcus sp. (strain CC9311)).